The primary structure comprises 229 residues: uncharacterized protein (229 aa).

7 helical membrane-spanning segments follow: residues 21 to 41 (IYSLVGMGVGLSAFVSYLMLY), 56 to 76 (MIYYGAAIIELILVFVASSAA), 83 to 103 (ALPIFLIYSALNGFTLSFIIV), 109 to 129 (TVFQAFLSSAAVFFAMSIIGV), 141 to 161 (AMFAALIGVVVASLINLFIGS), 162 to 182 (GMMSYVISVISVLIFSGLIAS), and 202 to 222 (WAVAMALSLYLDFINLFISLL).

It belongs to the BI1 family.

The protein localises to the cell membrane. This is an uncharacterized protein from Streptococcus pyogenes serotype M1.